The primary structure comprises 428 residues: 4-hydroxy-3-methylbut-2-en-1-yl diphosphate synthase (flavodoxin) (428 aa).

The [4Fe-4S] cluster site is built by cysteine 300, cysteine 303, cysteine 346, and glutamate 353.

The protein belongs to the IspG family. [4Fe-4S] cluster serves as cofactor.

It catalyses the reaction (2E)-4-hydroxy-3-methylbut-2-enyl diphosphate + oxidized [flavodoxin] + H2O + 2 H(+) = 2-C-methyl-D-erythritol 2,4-cyclic diphosphate + reduced [flavodoxin]. It participates in isoprenoid biosynthesis; isopentenyl diphosphate biosynthesis via DXP pathway; isopentenyl diphosphate from 1-deoxy-D-xylulose 5-phosphate: step 5/6. Converts 2C-methyl-D-erythritol 2,4-cyclodiphosphate (ME-2,4cPP) into 1-hydroxy-2-methyl-2-(E)-butenyl 4-diphosphate. The sequence is that of 4-hydroxy-3-methylbut-2-en-1-yl diphosphate synthase (flavodoxin) from Methylobacillus flagellatus (strain ATCC 51484 / DSM 6875 / VKM B-1610 / KT).